The sequence spans 3739 residues: Pikromycin polyketide synthase component PikAII (3739 aa).

In terms of domain architecture, Ketosynthase family 3 (KS3) 1 spans 35 to 463; sequence GEPVAIVGMA…GTNAHVVLEE (429 aa). Module stretches follow at residues 38–1517 and 1542–3642; these read VAIV…EFLL and VAIV…GHLL. C208 acts as the Acyl-thioester intermediate; for beta-ketoacyl synthase 1 activity in catalysis. Catalysis depends on for beta-ketoacyl synthase 1 activity residues H343 and H383. The segment at 572–877 is acyltransferase 1; sequence FVFPGQGTQW…ERLVTSLAEA (306 aa). S662 serves as the catalytic Acyl-ester intermediate; for acyltransferase 1 activity. A C2-type beta-ketoacyl reductase 1 region spans residues 1150–1343; sequence GTVLVTGAEE…VTSVAWSPWE (194 aa). The active-site For C2-type beta-ketoacyl reductase 1 and probable racemase activities is the Y1313. In terms of domain architecture, Carrier 1 spans 1445 to 1520; it reads RRMQELVREH…TLAEFLLAEI (76 aa). Residue S1480 is modified to O-(pantetheine 4'-phosphoryl)serine. The Ketosynthase family 3 (KS3) 2 domain occupies 1539-1967; sequence DEPVAIVGMA…GTNAHIVLEE (429 aa). The active-site Acyl-thioester intermediate; for beta-ketoacyl synthase 2 activity is C1712. Residues H1847 and H1887 each act as for beta-ketoacyl synthase 2 activity in the active site. The acyltransferase 2 stretch occupies residues 2069–2374; sequence FVFPGQGTQW…HRLTTSLAEA (306 aa). Catalysis depends on S2159, which acts as the Acyl-ester intermediate; for acyltransferase 2 activity. The segment at 2428-2553 is N-terminal hotdog fold; sequence HPLLGAAVAL…GVLAARADRT (126 aa). Residues 2428 to 2703 are dehydratase; sequence HPLLGAAVAL…LTVLPVDPAQ (276 aa). The region spanning 2428-2705 is the PKS/mFAS DH domain; that stretch reads HPLLGAAVAL…VLPVDPAQLA (278 aa). The Proton acceptor; for dehydratase activity role is filled by H2460. The segment at 2567–2705 is C-terminal hotdog fold; it reads AEPVDVDGLY…VLPVDPAQLA (139 aa). D2629 acts as the Proton donor; for dehydratase activity in catalysis. Residues 2959–3267 are enoyl reductase; it reads GSLESLTAAP…QARHTGKVVL (309 aa). Y3005 functions as the For enoyl reductase activity in the catalytic mechanism. Residues 3092-3109, 3285-3288, 3309-3312, 3338-3339, K3388, and 3412-3413 each bind NADP(+); these read LLVHSAAGGVGMAAVQLA, TGAL, SRRG, DV, and FS. Residues 3277–3458 form a beta-ketoacyl reductase 2 region; sequence GTVLLTGGTG…LSLGWGLWAE (182 aa). The active-site For beta-ketoacyl reductase 2 activity is Y3427. The Carrier 2 domain maps to 3570–3645; the sequence is AHLRDLVRTH…ELAGHLLDEL (76 aa). O-(pantetheine 4'-phosphoryl)serine is present on S3605.

As to quaternary structure, homodimer. Pikromycin PKS consists of a combination of multimodular (PikAI and PikAII) and monomodular (PikAIII and PikAIV) polypeptides each coding for a functional synthase subunit which participates in 1 (monomodular) or 2 (multimodular) of the six FAS-like elongation steps required for formation of the polyketide. Module 1, 2, 3, 4, 5, and 6 participating in biosynthesis steps 1, 2, 3, 4, 5, and 6, respectively. It depends on pantetheine 4'-phosphate as a cofactor.

The enzyme catalyses 5 (S)-methylmalonyl-CoA + malonyl-CoA + 5 NADPH + 11 H(+) = 10-deoxymethynolide + 6 CO2 + 5 NADP(+) + 6 CoA + 2 H2O. It carries out the reaction 6 (S)-methylmalonyl-CoA + malonyl-CoA + 5 NADPH + 12 H(+) = narbonolide + 7 CO2 + 5 NADP(+) + 7 CoA + 2 H2O. The protein operates within antibiotic biosynthesis. Functionally, involved in the biosynthesis of 12- and 14-membered ring macrolactone antibiotics such as methymycin/neomethymycin and pikromycin/narbomycin, respectively. Component of the pikromycin PKS which catalyzes the biosynthesis of both precursors 10-deoxymethynolide (12-membered ring macrolactone) and narbonolide (14-membered ring macrolactone). Chain elongation through PikAI, PikAII and PikAIII followed by thioesterase catalyzed termination results in the production of 10-deoxymethynolide, while continued elongation through PikAIV, followed by thioesterase (TE) catalyzed cyclization results in the biosynthesis of the narbonolide. The chain is Pikromycin polyketide synthase component PikAII from Streptomyces venezuelae.